A 251-amino-acid chain; its full sequence is MNLNSIPAFQDNYIWVLNNDEGRCVIVDPGEAAPVLKAIDDHKWIPEAIFLTHHHHDHVGGVKELLQHFPQMTVYGPTETQDKGATHLVGDGDTVLVLGYNFSIFATPGHTLGHICYFSHPYLFCGDTLFSGGCGRLFEGTALQMYQSLMKINTLPDDTLICSAHEYTLANLKFALSILPHDSFINEYYRKVNELRVKKQMTLPVILKNERKINLFLRTEDIDLINEINKETILQQPEARFAWLRSKKDTF.

Zn(2+) contacts are provided by His-53, His-55, Asp-57, His-58, His-110, Asp-127, and His-165.

Belongs to the metallo-beta-lactamase superfamily. Glyoxalase II family. Monomer. Requires Zn(2+) as cofactor.

The enzyme catalyses an S-(2-hydroxyacyl)glutathione + H2O = a 2-hydroxy carboxylate + glutathione + H(+). Its pathway is secondary metabolite metabolism; methylglyoxal degradation; (R)-lactate from methylglyoxal: step 2/2. Its function is as follows. Thiolesterase that catalyzes the hydrolysis of S-D-lactoyl-glutathione to form glutathione and D-lactic acid. In Salmonella arizonae (strain ATCC BAA-731 / CDC346-86 / RSK2980), this protein is Hydroxyacylglutathione hydrolase.